The chain runs to 188 residues: UPF0157 protein DR_2534 (188 aa).

Gly residues predominate over residues 1-12 (MGRGGRGVGGGR). The interval 1-37 (MGRGGRGVGGGRPEGHGASVEGGRTRQTEGMDLISPD) is disordered.

It belongs to the UPF0157 (GrpB) family.

The protein is UPF0157 protein DR_2534 of Deinococcus radiodurans (strain ATCC 13939 / DSM 20539 / JCM 16871 / CCUG 27074 / LMG 4051 / NBRC 15346 / NCIMB 9279 / VKM B-1422 / R1).